We begin with the raw amino-acid sequence, 84 residues long: U2-theraphotoxin-Cg1b 2 (84 aa).

The N-terminal stretch at 1 to 21 is a signal peptide; sequence MKVSVLITLAVLGVMFLLTSA. A propeptide spanning residues 22–48 is cleaved from the precursor; that stretch reads EERGSDQMDSPAWLKSMEIIFQSEERE. 3 disulfides stabilise this stretch: Cys49–Cys63, Cys56–Cys68, and Cys62–Cys76.

This sequence belongs to the neurotoxin 10 (Hwtx-1) family. 06 (F4b) subfamily. As to expression, expressed by the venom gland.

The protein localises to the secreted. Probable ion channel inhibitor. This Chilobrachys guangxiensis (Chinese earth tiger tarantula) protein is U2-theraphotoxin-Cg1b 2.